The chain runs to 157 residues: Crossover junction endodeoxyribonuclease RuvC (157 aa).

Active-site residues include Asp7, Glu66, and Asp139. Mg(2+) is bound by residues Asp7, Glu66, and Asp139.

It belongs to the RuvC family. In terms of assembly, homodimer which binds Holliday junction (HJ) DNA. The HJ becomes 2-fold symmetrical on binding to RuvC with unstacked arms; it has a different conformation from HJ DNA in complex with RuvA. In the full resolvosome a probable DNA-RuvA(4)-RuvB(12)-RuvC(2) complex forms which resolves the HJ. Mg(2+) is required as a cofactor.

It localises to the cytoplasm. It catalyses the reaction Endonucleolytic cleavage at a junction such as a reciprocal single-stranded crossover between two homologous DNA duplexes (Holliday junction).. The RuvA-RuvB-RuvC complex processes Holliday junction (HJ) DNA during genetic recombination and DNA repair. Endonuclease that resolves HJ intermediates. Cleaves cruciform DNA by making single-stranded nicks across the HJ at symmetrical positions within the homologous arms, yielding a 5'-phosphate and a 3'-hydroxyl group; requires a central core of homology in the junction. The consensus cleavage sequence is 5'-(A/T)TT(C/G)-3'. Cleavage occurs on the 3'-side of the TT dinucleotide at the point of strand exchange. HJ branch migration catalyzed by RuvA-RuvB allows RuvC to scan DNA until it finds its consensus sequence, where it cleaves and resolves the cruciform DNA. In terms of biological role, required for efficient infection in a mouse model system. The protein is Crossover junction endodeoxyribonuclease RuvC of Helicobacter pylori (strain G27).